The sequence spans 440 residues: UDP-N-acetylglucosamine 1-carboxyvinyltransferase 1 (440 aa).

22-23 serves as a coordination point for phosphoenolpyruvate; the sequence is KN. A UDP-N-acetyl-alpha-D-glucosamine-binding site is contributed by R93. C117 acts as the Proton donor in catalysis. C117 carries the post-translational modification 2-(S-cysteinyl)pyruvic acid O-phosphothioketal. Residues 122–126, D306, and V328 each bind UDP-N-acetyl-alpha-D-glucosamine; that span reads RPIDQ.

The protein belongs to the EPSP synthase family. MurA subfamily.

It is found in the cytoplasm. It catalyses the reaction phosphoenolpyruvate + UDP-N-acetyl-alpha-D-glucosamine = UDP-N-acetyl-3-O-(1-carboxyvinyl)-alpha-D-glucosamine + phosphate. The protein operates within cell wall biogenesis; peptidoglycan biosynthesis. In terms of biological role, cell wall formation. Adds enolpyruvyl to UDP-N-acetylglucosamine. This chain is UDP-N-acetylglucosamine 1-carboxyvinyltransferase 1, found in Halalkalibacterium halodurans (strain ATCC BAA-125 / DSM 18197 / FERM 7344 / JCM 9153 / C-125) (Bacillus halodurans).